The following is a 454-amino-acid chain: Chromosomal replication initiator protein DnaA (454 aa).

A domain I, interacts with DnaA modulators region spans residues 1–83 (MMTDSMRLVW…RPLKVLLEVA (83 aa)). The domain II stretch occupies residues 83–115 (AECVAEAPETPEEAPQQLCLPAFADIPRPSSGR). A domain III, AAA+ region region spans residues 116 to 333 (LLNRDFTFDS…SGIKGLAARN (218 aa)). Residues glycine 160, glycine 162, lysine 163, and serine 164 each coordinate ATP. A domain IV, binds dsDNA region spans residues 334 to 454 (SIMGRGIDLK…LCGKIEAGEF (121 aa)).

The protein belongs to the DnaA family. As to quaternary structure, oligomerizes as a right-handed, spiral filament on DNA at oriC.

The protein resides in the cytoplasm. Its function is as follows. Plays an essential role in the initiation and regulation of chromosomal replication. ATP-DnaA binds to the origin of replication (oriC) to initiate formation of the DNA replication initiation complex once per cell cycle. Binds the DnaA box (a 9 base pair repeat at the origin) and separates the double-stranded (ds)DNA. Forms a right-handed helical filament on oriC DNA; dsDNA binds to the exterior of the filament while single-stranded (ss)DNA is stabiized in the filament's interior. The ATP-DnaA-oriC complex binds and stabilizes one strand of the AT-rich DNA unwinding element (DUE), permitting loading of DNA polymerase. After initiation quickly degrades to an ADP-DnaA complex that is not apt for DNA replication. Binds acidic phospholipids. This is Chromosomal replication initiator protein DnaA from Desulfatibacillum aliphaticivorans.